The chain runs to 385 residues: DnaJ homolog subfamily C member 28 (385 aa).

One can recognise a J domain in the interval 48–132 (EYYRLLNLDE…EGKFKYNTPQ (85 aa)). Positions 261 to 318 (KEIKDTIEQLREALLMSRKKLGNPLSPTEQKQWAQVCEQFQEKIRKLNKRINDFNLIV) form a coiled coil.

May have a role in protein folding or as a chaperone. The chain is DnaJ homolog subfamily C member 28 (Dnajc28) from Mus musculus (Mouse).